The primary structure comprises 210 residues: Ribosomal RNA large subunit methyltransferase E (210 aa).

5 residues coordinate S-adenosyl-L-methionine: Gly60, Trp62, Asp80, Asp96, and Asp122. Lys162 (proton acceptor) is an active-site residue.

It belongs to the class I-like SAM-binding methyltransferase superfamily. RNA methyltransferase RlmE family.

Its subcellular location is the cytoplasm. The enzyme catalyses uridine(2552) in 23S rRNA + S-adenosyl-L-methionine = 2'-O-methyluridine(2552) in 23S rRNA + S-adenosyl-L-homocysteine + H(+). Specifically methylates the uridine in position 2552 of 23S rRNA at the 2'-O position of the ribose in the fully assembled 50S ribosomal subunit. This Dichelobacter nodosus (strain VCS1703A) protein is Ribosomal RNA large subunit methyltransferase E.